The sequence spans 221 residues: LHFPL tetraspan subfamily member 5 protein (221 aa).

Residues 1–24 (MPKLLPAQEAARIYHTNYVRNARA) lie on the Cytoplasmic side of the membrane. A helical membrane pass occupies residues 25–45 (MGVLWALFTLCFSILMVVTFI). The Extracellular segment spans residues 46–98 (QPYWIGDSIDTPQAGYFGLFSYCIGNALTGELICKGSPLDFGTIPSSAFKTAM). A helical transmembrane segment spans residues 99 to 119 (FFVGISTFLIIGSILCFSLFF). The Cytoplasmic portion of the chain corresponds to 120 to 128 (FCNAATVYK). A helical membrane pass occupies residues 129–149 (VCAWMQLAAATGLMIGCLIYP). Over 150-179 (DGWDSSEVKRMCGDKTDKYTLGACTVRWAY) the chain is Extracellular. Residues 180-200 (ILCIIGILDALILSFLAFVLG) form a helical membrane-spanning segment. Topologically, residues 201-221 (NRQDNLLPSDFKVESKEEGNE) are cytoplasmic.

The protein belongs to the LHFP family.

The protein resides in the cell membrane. Its function is as follows. Probable component of the mechanotransducer (MET) non-specific cation channel complex. In Gallus gallus (Chicken), this protein is LHFPL tetraspan subfamily member 5 protein.